Reading from the N-terminus, the 123-residue chain is Large ribosomal subunit protein uL24 (123 aa).

This sequence belongs to the universal ribosomal protein uL24 family. Part of the 50S ribosomal subunit.

In terms of biological role, one of two assembly initiator proteins, it binds directly to the 5'-end of the 23S rRNA, where it nucleates assembly of the 50S subunit. Functionally, one of the proteins that surrounds the polypeptide exit tunnel on the outside of the subunit. The chain is Large ribosomal subunit protein uL24 from Solibacter usitatus (strain Ellin6076).